Here is a 563-residue protein sequence, read N- to C-terminus: Benzaldehyde lyase (563 aa).

It belongs to the TPP enzyme family. A metal cation is required as a cofactor. Requires thiamine diphosphate as cofactor.

It catalyses the reaction benzoin = 2 benzaldehyde. Its function is as follows. Cleavage of benzoin-anisoin acyloin linkage. This is Benzaldehyde lyase (bznB) from Pseudomonas fluorescens.